Here is a 209-residue protein sequence, read N- to C-terminus: Probable nicotinate-nucleotide adenylyltransferase (209 aa).

It belongs to the NadD family.

The catalysed reaction is nicotinate beta-D-ribonucleotide + ATP + H(+) = deamido-NAD(+) + diphosphate. It functions in the pathway cofactor biosynthesis; NAD(+) biosynthesis; deamido-NAD(+) from nicotinate D-ribonucleotide: step 1/1. Functionally, catalyzes the reversible adenylation of nicotinate mononucleotide (NaMN) to nicotinic acid adenine dinucleotide (NaAD). The polypeptide is Probable nicotinate-nucleotide adenylyltransferase (Hydrogenovibrio crunogenus (strain DSM 25203 / XCL-2) (Thiomicrospira crunogena)).